Here is a 379-residue protein sequence, read N- to C-terminus: Citrate synthase (379 aa).

Residues His225, His265, and Asp316 contribute to the active site.

It belongs to the citrate synthase family. In terms of assembly, homodimer.

It catalyses the reaction oxaloacetate + acetyl-CoA + H2O = citrate + CoA + H(+). The protein operates within carbohydrate metabolism; tricarboxylic acid cycle; isocitrate from oxaloacetate: step 1/2. Functionally, might regulate the synthesis and function of enzymes involved in later enzymatic steps of Krebs cycle. The chain is Citrate synthase (citZ) from Haloferax volcanii (strain ATCC 29605 / DSM 3757 / JCM 8879 / NBRC 14742 / NCIMB 2012 / VKM B-1768 / DS2) (Halobacterium volcanii).